The sequence spans 173 residues: Probable xanthine dehydrogenase subunit E (173 aa).

The region spanning E14–L90 is the 2Fe-2S ferredoxin-type domain. Positions 52, 57, 60, 72, 110, 113, 145, and 147 each coordinate [2Fe-2S] cluster.

As to quaternary structure, could be composed of four subunits: PucA, PucC, PucD and PucE. [2Fe-2S] cluster is required as a cofactor.

The catalysed reaction is xanthine + NAD(+) + H2O = urate + NADH + H(+). It catalyses the reaction hypoxanthine + NAD(+) + H2O = xanthine + NADH + H(+). It participates in purine metabolism; hypoxanthine degradation; urate from hypoxanthine: step 1/2. Its pathway is purine metabolism; hypoxanthine degradation; urate from hypoxanthine: step 2/2. Oxidizes hypoxanthine and xanthine to uric acid. This chain is Probable xanthine dehydrogenase subunit E (pucE), found in Bacillus subtilis (strain 168).